The primary structure comprises 443 residues: Xaa-Pro dipeptidase (443 aa).

Positions 246, 257, 339, 384, and 423 each coordinate Mn(2+).

This sequence belongs to the peptidase M24B family. Bacterial-type prolidase subfamily. Mn(2+) serves as cofactor.

The enzyme catalyses Xaa-L-Pro dipeptide + H2O = an L-alpha-amino acid + L-proline. Functionally, splits dipeptides with a prolyl residue in the C-terminal position. The protein is Xaa-Pro dipeptidase of Escherichia coli (strain 55989 / EAEC).